The sequence spans 540 residues: DM7 family protein GM11956 (540 aa).

Positions 416–443 (ATDTRGRDEIRTSCDQPQEKDEGSAEAD) are disordered. Basic and acidic residues predominate over residues 417–443 (TDTRGRDEIRTSCDQPQEKDEGSAEAD).

Belongs to the DM7 family.

The protein is DM7 family protein GM11956 of Drosophila sechellia (Fruit fly).